A 488-amino-acid chain; its full sequence is Ribulose bisphosphate carboxylase large chain (488 aa).

Substrate-binding residues include asparagine 127 and threonine 177. Residue lysine 179 is the Proton acceptor of the active site. Lysine 181 is a binding site for substrate. Mg(2+)-binding residues include lysine 205, aspartate 207, and glutamate 208. Position 205 is an N6-carboxylysine (lysine 205). Histidine 297 (proton acceptor) is an active-site residue. Residues arginine 298, histidine 330, and serine 382 each coordinate substrate.

It belongs to the RuBisCO large chain family. Type I subfamily. As to quaternary structure, heterohexadecamer of 8 large chains and 8 small chains. The cofactor is Mg(2+).

The protein resides in the plastid. The protein localises to the chloroplast. The enzyme catalyses 2 (2R)-3-phosphoglycerate + 2 H(+) = D-ribulose 1,5-bisphosphate + CO2 + H2O. The catalysed reaction is D-ribulose 1,5-bisphosphate + O2 = 2-phosphoglycolate + (2R)-3-phosphoglycerate + 2 H(+). Its function is as follows. RuBisCO catalyzes two reactions: the carboxylation of D-ribulose 1,5-bisphosphate, the primary event in carbon dioxide fixation, as well as the oxidative fragmentation of the pentose substrate in the photorespiration process. Both reactions occur simultaneously and in competition at the same active site. This is Ribulose bisphosphate carboxylase large chain from Rhodomonas salina (Cryptomonas salina).